Here is a 220-residue protein sequence, read N- to C-terminus: NAD(P)H-quinone oxidoreductase subunit M, chloroplastic (220 aa).

The N-terminal 37 residues, 1–37 (MATTASPFLSPAKLSLERRLPRATWTARRSVRFPPVR), are a transit peptide targeting the chloroplast. The segment at 20–91 (LPRATWTARR…PVQPLAESKN (72 aa)) is disordered. Residues 34-44 (PPVRAQDQQQQ) show a composition bias toward low complexity.

It belongs to the NDH complex subunit M family. Part of the chloroplast NDH complex, composed of a mixture of chloroplast and nucleus encoded subunits. Component of the NDH subcomplex A, at least composed of ndhH, ndhI, ndhJ, ndhK, ndhL, ndhM, ndhN and ndhO.

The protein localises to the plastid. Its subcellular location is the chloroplast thylakoid membrane. The enzyme catalyses a plastoquinone + NADH + (n+1) H(+)(in) = a plastoquinol + NAD(+) + n H(+)(out). The catalysed reaction is a plastoquinone + NADPH + (n+1) H(+)(in) = a plastoquinol + NADP(+) + n H(+)(out). In terms of biological role, NDH shuttles electrons from NAD(P)H:plastoquinone, via FMN and iron-sulfur (Fe-S) centers, to quinones in the photosynthetic chain and possibly in a chloroplast respiratory chain. The immediate electron acceptor for the enzyme in this species is believed to be plastoquinone. Couples the redox reaction to proton translocation, and thus conserves the redox energy in a proton gradient. In Oryza sativa subsp. indica (Rice), this protein is NAD(P)H-quinone oxidoreductase subunit M, chloroplastic.